The following is a 429-amino-acid chain: Adenylosuccinate synthetase (429 aa).

GTP-binding positions include 12 to 18 (GDEGKGK) and 40 to 42 (GHT). Asp13 (proton acceptor) is an active-site residue. The Mg(2+) site is built by Asp13 and Gly40. Residues 13 to 16 (DEGK), 38 to 41 (NAGH), Thr129, Arg143, Gln223, Thr238, and Arg302 each bind IMP. His41 serves as the catalytic Proton donor. 298-304 (VVTGRKR) is a substrate binding site. GTP is bound by residues Arg304, 330-332 (KLD), and 412-414 (STS).

This sequence belongs to the adenylosuccinate synthetase family. As to quaternary structure, homodimer. The cofactor is Mg(2+).

It localises to the cytoplasm. It catalyses the reaction IMP + L-aspartate + GTP = N(6)-(1,2-dicarboxyethyl)-AMP + GDP + phosphate + 2 H(+). It functions in the pathway purine metabolism; AMP biosynthesis via de novo pathway; AMP from IMP: step 1/2. Its function is as follows. Plays an important role in the de novo pathway of purine nucleotide biosynthesis. Catalyzes the first committed step in the biosynthesis of AMP from IMP. This Bartonella tribocorum (strain CIP 105476 / IBS 506) protein is Adenylosuccinate synthetase.